The chain runs to 256 residues: Leucyl/phenylalanyl-tRNA--protein transferase (256 aa).

A disordered region spans residues 232-256; sequence DGCTGASRHGPGADMRRGDMSREST. Residues 245–256 show a composition bias toward basic and acidic residues; sequence DMRRGDMSREST.

The protein belongs to the L/F-transferase family.

The protein localises to the cytoplasm. It catalyses the reaction N-terminal L-lysyl-[protein] + L-leucyl-tRNA(Leu) = N-terminal L-leucyl-L-lysyl-[protein] + tRNA(Leu) + H(+). It carries out the reaction N-terminal L-arginyl-[protein] + L-leucyl-tRNA(Leu) = N-terminal L-leucyl-L-arginyl-[protein] + tRNA(Leu) + H(+). The catalysed reaction is L-phenylalanyl-tRNA(Phe) + an N-terminal L-alpha-aminoacyl-[protein] = an N-terminal L-phenylalanyl-L-alpha-aminoacyl-[protein] + tRNA(Phe). Functions in the N-end rule pathway of protein degradation where it conjugates Leu, Phe and, less efficiently, Met from aminoacyl-tRNAs to the N-termini of proteins containing an N-terminal arginine or lysine. The sequence is that of Leucyl/phenylalanyl-tRNA--protein transferase from Chromohalobacter salexigens (strain ATCC BAA-138 / DSM 3043 / CIP 106854 / NCIMB 13768 / 1H11).